The primary structure comprises 449 residues: 23S rRNA (uracil(1939)-C(5))-methyltransferase RlmD (449 aa).

Residues 12-70 (SKQLSAKQSFSVHQLDHLGAGIAQHQGKVVFIPGALPNETVQAQLTEQKKNYARAKLIK) form the TRAM domain. Residues C83, C89, C92, and C170 each contribute to the [4Fe-4S] cluster site. Residues Q282, F311, N316, E332, D359, and D379 each coordinate S-adenosyl-L-methionine. Catalysis depends on C405, which acts as the Nucleophile.

Belongs to the class I-like SAM-binding methyltransferase superfamily. RNA M5U methyltransferase family. RlmD subfamily.

The enzyme catalyses uridine(1939) in 23S rRNA + S-adenosyl-L-methionine = 5-methyluridine(1939) in 23S rRNA + S-adenosyl-L-homocysteine + H(+). Catalyzes the formation of 5-methyl-uridine at position 1939 (m5U1939) in 23S rRNA. This chain is 23S rRNA (uracil(1939)-C(5))-methyltransferase RlmD, found in Shewanella sp. (strain ANA-3).